Consider the following 80-residue polypeptide: MGQIGIWQILIIALVILVLFGRGKISDMMGDFGKGVSSFKKGLNEEDKPAEPAAKIEGPSHEAKPAGEAAKDPRPADKQG.

Residues 1 to 21 form a helical membrane-spanning segment; sequence MGQIGIWQILIIALVILVLFG. A disordered region spans residues 38 to 80; sequence SFKKGLNEEDKPAEPAAKIEGPSHEAKPAGEAAKDPRPADKQG. The span at 58-80 shows a compositional bias: basic and acidic residues; the sequence is GPSHEAKPAGEAAKDPRPADKQG.

Belongs to the TatA/E family. In terms of assembly, the Tat system comprises two distinct complexes: a TatABC complex, containing multiple copies of TatA, TatB and TatC subunits, and a separate TatA complex, containing only TatA subunits. Substrates initially bind to the TatABC complex, which probably triggers association of the separate TatA complex to form the active translocon.

Its subcellular location is the cell inner membrane. Part of the twin-arginine translocation (Tat) system that transports large folded proteins containing a characteristic twin-arginine motif in their signal peptide across membranes. TatA could form the protein-conducting channel of the Tat system. This chain is Sec-independent protein translocase protein TatA, found in Erythrobacter litoralis (strain HTCC2594).